A 565-amino-acid polypeptide reads, in one-letter code: MSEQKLALNEYLKTDSDYLRGTIKEGLDSSVTGSFSDGDQQLIKFHGFYQQDDRDLRNERKEQKLEPLYSFMLRARVPGGVCTPKQWLGVDEIASTLTSSNSIRLTTRQTFQYHGIPKRNLKTIIQGLDREALDSIAACGDVNRNVMCNPNPVESKLHAQAYEVAKKLSDHLLPHTRAYAEIWLDEEKLLTTEDETVEPVYGKTYLPRKFKMAVAVPPDNDVDVYTNDLGFIAVAENGELVGFNLTAGGGMGSTHGEVETFPRLADDFGFIKTEDVMKFAEAVMTVQRDWGNRTNRKRSRLKYTIVDHGYEKFKAEVEARAGVKFEPKRDVVIGDRGDRYGWVEGVDGKWHLTLFIESGRIKDVPGKSLQTGMREIAKIHKGDFRMTSNQNMIIAGVAPEDKATIEGLARKHGLLGQVLTQTRGHSIACVALPTCPLAMAEAERYFPEFIDHIDALQAKNGISDQAIVVRMTGCPNGCARPFAAEIGLVGKAPGRYNLYLGANFEGTRLNKMYRENIQEAEILAELDALFARYAIERNAGETFGNFTVRTGVVKAVIDAAKDFHG.

The [4Fe-4S] cluster site is built by C429, C435, C474, and C478. C478 contacts siroheme.

It belongs to the nitrite and sulfite reductase 4Fe-4S domain family. In terms of assembly, alpha(8)-beta(8). The alpha component is a flavoprotein, the beta component is a hemoprotein. Siroheme is required as a cofactor. Requires [4Fe-4S] cluster as cofactor.

It catalyses the reaction hydrogen sulfide + 3 NADP(+) + 3 H2O = sulfite + 3 NADPH + 4 H(+). Its pathway is sulfur metabolism; hydrogen sulfide biosynthesis; hydrogen sulfide from sulfite (NADPH route): step 1/1. In terms of biological role, component of the sulfite reductase complex that catalyzes the 6-electron reduction of sulfite to sulfide. This is one of several activities required for the biosynthesis of L-cysteine from sulfate. This is Sulfite reductase [NADPH] hemoprotein beta-component from Shewanella sp. (strain MR-4).